Here is a 156-residue protein sequence, read N- to C-terminus: MQVSGTIVVILMAANVEAKIYERCDLAKKLEAAGLNGFKGYTIGDWLCMAHYESGFDTSFVNHNPDGSSEYGIFQLNSAWWCYNGVTPSENLCHMDCHELLNRHILDDIMCAKKVVSSESGMSAWDSWNQHCYGYDLSEWLRGCHMNAKPNKKIIS.

Residues Met-1–Ala-18 form the signal peptide. Residues Lys-19–Asn-147 enclose the C-type lysozyme domain. 4 disulfides stabilise this stretch: Cys-24-Cys-144, Cys-48-Cys-132, Cys-82-Cys-97, and Cys-93-Cys-111. The active site involves Glu-53.

It belongs to the glycosyl hydrolase 22 family.

It localises to the secreted. The enzyme catalyses Hydrolysis of (1-&gt;4)-beta-linkages between N-acetylmuramic acid and N-acetyl-D-glucosamine residues in a peptidoglycan and between N-acetyl-D-glucosamine residues in chitodextrins.. The polypeptide is Sperm acrosome-associated protein 5 (SPACA5) (Bos taurus (Bovine)).